The following is a 78-amino-acid chain: Large ribosomal subunit protein bL28 (78 aa).

A disordered region spans residues 1 to 21 (MSRVCQVTGKRPVSGNNRSHA).

Belongs to the bacterial ribosomal protein bL28 family.

In Yersinia enterocolitica serotype O:8 / biotype 1B (strain NCTC 13174 / 8081), this protein is Large ribosomal subunit protein bL28.